The primary structure comprises 834 residues: Periplasmic nitrate reductase (834 aa).

A signal peptide (tat-type signal) is located at residues 1–31 (MTGELTRREMLKAHAAGIAAATAGIALPAAA). A 4Fe-4S Mo/W bis-MGD-type domain is found at 43–99 (ITWSKAPCRFCGTGCGVMVGVKEGQVVATHGDMQAEVNRGLNCIKGYFLSKIMYGTD). Positions 50, 53, 57, and 85 each coordinate [4Fe-4S] cluster. Mo-bis(molybdopterin guanine dinucleotide)-binding positions include Lys-87, Gln-154, Asn-179, Cys-183, 216 to 223 (WGSNMAEM), 247 to 251 (STFTH), 266 to 268 (GTD), Met-377, Gln-381, Asn-487, 513 to 514 (SD), Lys-536, Asp-563, and 723 to 732 (TGRVLEHWHS). Trp-799 lines the substrate pocket. Residues Asn-807 and Lys-824 each contribute to the Mo-bis(molybdopterin guanine dinucleotide) site.

The protein belongs to the prokaryotic molybdopterin-containing oxidoreductase family. NasA/NapA/NarB subfamily. Component of the periplasmic nitrate reductase NapAB complex composed of NapA and NapB. The cofactor is [4Fe-4S] cluster. Mo-bis(molybdopterin guanine dinucleotide) is required as a cofactor. In terms of processing, predicted to be exported by the Tat system. The position of the signal peptide cleavage has not been experimentally proven.

The protein localises to the periplasm. It carries out the reaction 2 Fe(II)-[cytochrome] + nitrate + 2 H(+) = 2 Fe(III)-[cytochrome] + nitrite + H2O. Functionally, catalytic subunit of the periplasmic nitrate reductase complex NapAB. Receives electrons from NapB and catalyzes the reduction of nitrate to nitrite. This chain is Periplasmic nitrate reductase, found in Rhizobium meliloti (strain 1021) (Ensifer meliloti).